Reading from the N-terminus, the 229-residue chain is Putative 3-methyladenine DNA glycosylase (229 aa).

Belongs to the DNA glycosylase MPG family.

The protein is Putative 3-methyladenine DNA glycosylase of Enterococcus faecalis (strain ATCC 700802 / V583).